The chain runs to 310 residues: Phosphoribosylaminoimidazole-succinocarboxamide synthase (310 aa).

This sequence belongs to the SAICAR synthetase family.

The catalysed reaction is 5-amino-1-(5-phospho-D-ribosyl)imidazole-4-carboxylate + L-aspartate + ATP = (2S)-2-[5-amino-1-(5-phospho-beta-D-ribosyl)imidazole-4-carboxamido]succinate + ADP + phosphate + 2 H(+). It functions in the pathway purine metabolism; IMP biosynthesis via de novo pathway; 5-amino-1-(5-phospho-D-ribosyl)imidazole-4-carboxamide from 5-amino-1-(5-phospho-D-ribosyl)imidazole-4-carboxylate: step 1/2. The protein is Phosphoribosylaminoimidazole-succinocarboxamide synthase of Xanthomonas oryzae pv. oryzae (strain MAFF 311018).